A 142-amino-acid polypeptide reads, in one-letter code: Baculoviral IAP repeat-containing protein 5 (142 aa).

A BIR repeat occupies 18–88 (RVSTFKNWPF…KHSSGCAFLS (71 aa)). Residue S20 is modified to Phosphoserine; by AURKC. An N6-acetyllysine modification is found at K23. A Phosphothreonine; by CDK1 and CDK15 modification is found at T34. Residue T48 is modified to Phosphothreonine. 4 residues coordinate Zn(2+): C57, C60, H77, and C84. Residues K90, K110, K112, and K115 each carry the N6-acetyllysine modification. T117 bears the Phosphothreonine; by AURKB mark. N6-acetyllysine is present on K129.

It belongs to the IAP family. Monomer or homodimer. Exists as a homodimer in the apo state and as a monomer in the CPC-bound state. The monomer protects cells against apoptosis more efficiently than the dimer. Only the dimeric form is capable of enhancing tubulin stability in cells. When phosphorylated, interacts with LAMTOR5/HBXIP; the resulting complex binds pro-CASP9, as well as active CASP9, but much less efficiently. Component of the chromosomal passenger complex (CPC) composed of at least BIRC5/survivin, CDCA8/borealin, INCENP, AURKB or AURKC; in the complex forms a triple-helix bundle-based subcomplex with INCENP and CDCA8. Interacts with JTB. Interacts (via BIR domain) with histone H3 phosphorylated at 'Thr-3' (H3pT3). Interacts with EVI5. Interacts with GTP-bound RAN in both the S and M phases of the cell cycle. Interacts with USP9X. Interacts with tubulin. Interacts with BIRC2/c-IAP1. The acetylated form at Lys-129 interacts with STAT3. The monomeric form deacetylated at Lys-129 interacts with XPO1/CRM1. The monomeric form interacts with XIAP/BIRC4. Both the dimeric and monomeric form can interact with DIABLO/SMAC. Interacts with BIRC6/bruce. Interacts with FBXL7; this interaction facilitates the polyubiquitination and subsequent proteasomal degradation of BIRC5 by the SCF(FBXL7) E3 ubiquitin-protein ligase complex. In terms of processing, ubiquitinated by the Cul9-RING ubiquitin-protein ligase complex, leading to its degradation. Ubiquitination is required for centrosomal targeting. Deubiquitinated by USP35 or USP38; leading to stabilization. Acetylation at Lys-129 results in its homodimerization, while deacetylation promotes the formation of monomers which heterodimerize with XPO1/CRM1 which facilitates its nuclear export. The acetylated form represses STAT3 transactivation. The dynamic equilibrium between its acetylation and deacetylation at Lys-129 determines its interaction with XPO1/CRM1, its subsequent subcellular localization, and its ability to inhibit STAT3 transactivation. Post-translationally, in vitro phosphorylation at Thr-117 by AURKB prevents interaction with INCENP and localization to mitotic chromosomes. Phosphorylation at Thr-48 by CK2 is critical for its mitotic and anti-apoptotic activities. Phosphorylation at Thr-34 by CDK15 is critical for its anti-apoptotic activity. Phosphorylation at Ser-20 by AURKC is critical for regulation of proper chromosome alignment and segregation, and possibly cytokinesis.

Its subcellular location is the cytoplasm. The protein resides in the nucleus. It localises to the chromosome. The protein localises to the centromere. It is found in the cytoskeleton. Its subcellular location is the spindle. The protein resides in the kinetochore. It localises to the midbody. Multitasking protein that has dual roles in promoting cell proliferation and preventing apoptosis. Component of a chromosome passage protein complex (CPC) which is essential for chromosome alignment and segregation during mitosis and cytokinesis. Acts as an important regulator of the localization of this complex; directs CPC movement to different locations from the inner centromere during prometaphase to midbody during cytokinesis and participates in the organization of the center spindle by associating with polymerized microtubules. Involved in the recruitment of CPC to centromeres during early mitosis via association with histone H3 phosphorylated at 'Thr-3' (H3pT3) during mitosis. The complex with RAN plays a role in mitotic spindle formation by serving as a physical scaffold to help deliver the RAN effector molecule TPX2 to microtubules. May counteract a default induction of apoptosis in G2/M phase. The acetylated form represses STAT3 transactivation of target gene promoters. May play a role in neoplasia. Inhibitor of CASP3 and CASP7. Essential for the maintenance of mitochondrial integrity and function. This chain is Baculoviral IAP repeat-containing protein 5 (BIRC5), found in Bos taurus (Bovine).